Reading from the N-terminus, the 615-residue chain is Crinkler effector protein 15 (615 aa).

The first 17 residues, 1 to 17 (MVKLVCAIVGVAGSAFP), serve as a signal peptide directing secretion. Positions 18-54 (VDIDASQLVGDLKKAIKAENAMTFTGDAKDLQLFLAK) are LQLFLAK domain. A DWL domain region spans residues 55–136 (QPVDDESGKE…NMELPSSEQI (82 aa)). The short motif at 137–143 (HVLVVVP) is the HVLVXXP motif element. The N-linked (GlcNAc...) asparagine glycan is linked to N531.

This sequence belongs to the Crinkler effector family.

It localises to the secreted. The protein localises to the host nucleus. Functionally, secreted effector that elicits necrosis in host plants, a characteristic of plant innate immunity. The protein is Crinkler effector protein 15 of Phytophthora infestans (Potato late blight agent).